Here is a 1349-residue protein sequence, read N- to C-terminus: Zinc finger protein 804B (1349 aa).

The C2H2-type zinc finger occupies 55–79; sequence FYCELCDKQYHKHQEFDNHINSYDH. The disordered stretch occupies residues 985–1010; that stretch reads YASESRNDQDSAIPRTTEKDKSKSSH.

This is Zinc finger protein 804B (ZNF804B) from Homo sapiens (Human).